The chain runs to 287 residues: Bifunctional protein FolD (287 aa).

NADP(+) contacts are provided by residues 165–167 (GRG), T190, and I231.

The protein belongs to the tetrahydrofolate dehydrogenase/cyclohydrolase family. In terms of assembly, homodimer.

It carries out the reaction (6R)-5,10-methylene-5,6,7,8-tetrahydrofolate + NADP(+) = (6R)-5,10-methenyltetrahydrofolate + NADPH. It catalyses the reaction (6R)-5,10-methenyltetrahydrofolate + H2O = (6R)-10-formyltetrahydrofolate + H(+). The protein operates within one-carbon metabolism; tetrahydrofolate interconversion. Catalyzes the oxidation of 5,10-methylenetetrahydrofolate to 5,10-methenyltetrahydrofolate and then the hydrolysis of 5,10-methenyltetrahydrofolate to 10-formyltetrahydrofolate. The chain is Bifunctional protein FolD from Heliobacterium modesticaldum (strain ATCC 51547 / Ice1).